Consider the following 130-residue polypeptide: Small ribosomal subunit protein uS8 (130 aa).

It belongs to the universal ribosomal protein uS8 family. In terms of assembly, part of the 30S ribosomal subunit. Contacts proteins S5 and S12.

Its function is as follows. One of the primary rRNA binding proteins, it binds directly to 16S rRNA central domain where it helps coordinate assembly of the platform of the 30S subunit. The sequence is that of Small ribosomal subunit protein uS8 from Enterobacter sp. (strain 638).